We begin with the raw amino-acid sequence, 83 residues long: Male-specific opa-containing protein (83 aa).

Positions Met1–Ala18 are cleaved as a signal peptide. The interval Asp23 to Gly83 is disordered. Residues Pro28 to Ala49 are compositionally biased toward low complexity. The segment covering Pro50 to Ala59 has biased composition (pro residues).

In terms of tissue distribution, adult male abdomen.

May be a male specific regulatory factor. This chain is Male-specific opa-containing protein (msopa), found in Drosophila melanogaster (Fruit fly).